A 320-amino-acid polypeptide reads, in one-letter code: uncharacterized protein (320 aa).

This sequence belongs to the NAD(P)-dependent epimerase/dehydratase family.

This is an uncharacterized protein from Staphylococcus saprophyticus subsp. saprophyticus (strain ATCC 15305 / DSM 20229 / NCIMB 8711 / NCTC 7292 / S-41).